A 75-amino-acid chain; its full sequence is Defense protein 6 (75 aa).

Residues 1–20 (MKTCLVFAFFLVAVFAAVQA) form the signal peptide. Residues 21 to 32 (EENDSPQTLPRR) constitute a propeptide that is removed on maturation. 3 disulfide bridges follow: C44/C63, C49/C68, and C53/C70.

It belongs to the invertebrate defensin family.

It is found in the secreted. Has antibacterial activity. This is Defense protein 6 from Lonomia obliqua (Moth).